The sequence spans 328 residues: Purple acid phosphatase 7 (328 aa).

The N-terminal stretch at 1 to 24 is a signal peptide; sequence MKMHVCFSVILMFLSIFFINGALS. Position 48 (Asp-48) interacts with Fe cation. Residue Asn-56 is glycosylated (N-linked (GlcNAc...) asparagine). 2 residues coordinate Fe cation: Asp-81 and Tyr-84. Asp-81 contributes to the Zn(2+) binding site. Asn-119 and His-213 together coordinate Zn(2+). His-222 functions as the Proton donor in the catalytic mechanism. Zn(2+) is bound at residue His-248. 248 to 250 lines the substrate pocket; the sequence is HDH. His-250 provides a ligand contact to Fe cation.

This sequence belongs to the metallophosphoesterase superfamily. Purple acid phosphatase family. In terms of assembly, homodimer. The cofactor is Fe cation. Zn(2+) is required as a cofactor. Expressed in roots, stems, leaves, flowers and siliques.

It is found in the secreted. It carries out the reaction a phosphate monoester + H2O = an alcohol + phosphate. The polypeptide is Purple acid phosphatase 7 (PAP7) (Arabidopsis thaliana (Mouse-ear cress)).